The primary structure comprises 393 residues: uncharacterized protein (393 aa).

An ATP-binding site is contributed by Gly-67–Ser-74.

This is an uncharacterized protein from Mycobacterium tuberculosis (strain CDC 1551 / Oshkosh).